A 125-amino-acid polypeptide reads, in one-letter code: Glutamyl-tRNA(Gln) amidotransferase subunit C, mitochondrial (125 aa).

This sequence belongs to the GatC family. In terms of assembly, subunit of the heterotrimeric GatCAB amidotransferase (AdT) complex, composed of A, B and C subunits.

The protein resides in the mitochondrion. It carries out the reaction L-glutamyl-tRNA(Gln) + L-glutamine + ATP + H2O = L-glutaminyl-tRNA(Gln) + L-glutamate + ADP + phosphate + H(+). Functionally, allows the formation of correctly charged Gln-tRNA(Gln) through the transamidation of misacylated Glu-tRNA(Gln) in the mitochondria. The reaction takes place in the presence of glutamine and ATP through an activated gamma-phospho-Glu-tRNA(Gln). The sequence is that of Glutamyl-tRNA(Gln) amidotransferase subunit C, mitochondrial from Drosophila mojavensis (Fruit fly).